The primary structure comprises 525 residues: Nuclear polyadenylated RNA-binding protein NAB2 (525 aa).

2 disordered regions span residues Ser-102–Pro-160 and Gln-196–Phe-236. Positions Asp-103 to Pro-160 are enriched in low complexity. A run of 9 repeats spans residues Gln-121 to Pro-124, Gln-125 to Pro-128, Gln-129 to Pro-132, Gln-133 to Pro-136, Gln-137 to Pro-140, Gln-141 to Pro-144, Gln-145 to Pro-148, Gln-149 to Pro-152, and Gln-153 to Pro-156. The interval Gln-121–Pro-156 is 10 X 4 AA tandem repeats of Q-Q-Q-P. The 10; approximate repeat unit spans residues Gln-157–Pro-160. Omega-N-methylarginine is present on residues Arg-209 and Arg-222. The segment at Arg-209–Gly-228 is RNA-binding RGG-box. The PY-NLS nuclear localization signal stretch occupies residues Arg-209 to Leu-239. Thr-254 bears the Phosphothreonine mark. 7 C3H1-type zinc fingers span residues Cys-262–His-278, Cys-283–His-300, Cys-340–His-355, Cys-371–His-386, Cys-415–His-430, Cys-437–His-452, and Cys-458–His-473. Residues Asn-503–Asn-525 are disordered. A compositionally biased stretch (polar residues) spans Pro-510–Asn-525.

This sequence belongs to the ZC3H14 family. Interacts with MLP1. Interacts with PUB1. Post-translationally, methylated by HMT1.

It localises to the nucleus. Its subcellular location is the cytoplasm. In terms of biological role, RNA-binding protein involved in RNA processing and transcription regulation. Acts as a regulator of mRNA stability: binds the poly(A) tail of mRNAs and pre-mRNAs, preventing their degradation by the exosome. Involved in the biogenesis of circular RNAs (circRNAs) which are produced by back-splicing circularization of pre-mRNAs. Involved in mRNA poly(A) tail length control and nuclear export. Functions in surveillance and the packaging leading to generation of export-competent mRNPs. Controls both mRNP compaction that facilitates movement through nuclear pore complexes and the length of transcript poly(A) tails. Also acts as a regulator of transcription. Associates directly with nascent RNA polymerase II transcripts and remains associated during subsequent nuclear RNA processing reactions. Required for RNA polymerase III (RNAPIII) transcription: required for the occupancy of RNAPIII and Transcription factor IIIB (TFIIIB) at target genes, possibly via direct association with nascent RNAPIII transcripts. This is Nuclear polyadenylated RNA-binding protein NAB2 from Saccharomyces cerevisiae (strain ATCC 204508 / S288c) (Baker's yeast).